Reading from the N-terminus, the 649-residue chain is Threonine--tRNA ligase (649 aa).

The region spanning 1–60 (MHVVLPDGKQLELPMGATALDAASAIGPRLAQDALAATANGELVDLMTPLPDGASITLIT) is the TGS domain. The tract at residues 248 to 544 (DHRKLGRELE…LIEHYAGDFP (297 aa)) is catalytic. Residues cysteine 341, histidine 392, and histidine 521 each coordinate Zn(2+).

The protein belongs to the class-II aminoacyl-tRNA synthetase family. As to quaternary structure, homodimer. The cofactor is Zn(2+).

The protein resides in the cytoplasm. It carries out the reaction tRNA(Thr) + L-threonine + ATP = L-threonyl-tRNA(Thr) + AMP + diphosphate + H(+). Catalyzes the attachment of threonine to tRNA(Thr) in a two-step reaction: L-threonine is first activated by ATP to form Thr-AMP and then transferred to the acceptor end of tRNA(Thr). Also edits incorrectly charged L-seryl-tRNA(Thr). This is Threonine--tRNA ligase from Deinococcus deserti (strain DSM 17065 / CIP 109153 / LMG 22923 / VCD115).